The following is a 60-amino-acid chain: UPF0434 protein YcaR (60 aa).

The protein belongs to the UPF0434 family.

This chain is UPF0434 protein YcaR, found in Salmonella agona (strain SL483).